Reading from the N-terminus, the 184-residue chain is ATP-dependent protease subunit HslV (184 aa).

Thr-11 is a catalytic residue. Na(+) is bound by residues Ala-165, Cys-168, and Thr-171.

The protein belongs to the peptidase T1B family. HslV subfamily. A double ring-shaped homohexamer of HslV is capped on each side by a ring-shaped HslU homohexamer. The assembly of the HslU/HslV complex is dependent on binding of ATP.

It localises to the cytoplasm. It catalyses the reaction ATP-dependent cleavage of peptide bonds with broad specificity.. Allosterically activated by HslU binding. In terms of biological role, protease subunit of a proteasome-like degradation complex believed to be a general protein degrading machinery. This Zymomonas mobilis subsp. mobilis (strain ATCC 31821 / ZM4 / CP4) protein is ATP-dependent protease subunit HslV.